The primary structure comprises 61 residues: Metallothionein-1B (61 aa).

Residues 1–29 are beta; the sequence is MDPNCSCTTGGSCACAGSCKCKECKCTSC. A divalent metal cation contacts are provided by Cys5, Cys7, Cys13, Cys15, Cys19, Cys21, Cys24, Cys26, Cys29, Cys33, Cys34, Cys36, Cys37, Cys41, Cys44, Cys48, Cys50, Cys57, Cys59, and Cys60. The tract at residues 30 to 61 is alpha; it reads KKCCCSCCPVGCAKCAQGCVCKGSSEKCRCCA.

Belongs to the metallothionein superfamily. Type 1 family. Monomer.

In terms of biological role, metallothioneins have a high content of cysteine residues that bind various heavy metals; these proteins are transcriptionally regulated by both heavy metals and glucocorticoids. This Homo sapiens (Human) protein is Metallothionein-1B (MT1B).